A 767-amino-acid chain; its full sequence is Slo-interacting protein 1 (767 aa).

The region spanning 202–280 (QQSSTDTNKG…SVTLLVSRIL (79 aa)) is the PDZ domain. 2 disordered regions span residues 521 to 557 (GNAA…NPDE) and 744 to 767 (KEER…QQQQ). Polar residues predominate over residues 532-555 (NSSSAYNTGDSNNSASPHQNTTNP). The span at 744–755 (KEERKRHIERAR) shows a compositional bias: basic and acidic residues.

As to quaternary structure, interacts with Slo. As to expression, in embryos, it is expressed throughout the CNS and in several peripheral locations. Colocalizes with Slo.

Functionally, may selectively reduce calcium-activated potassium channel (Slo) currents by reducing the number of Slo channels in the plasma membrane. In Drosophila melanogaster (Fruit fly), this protein is Slo-interacting protein 1 (Slip1).